A 275-amino-acid polypeptide reads, in one-letter code: MALVKLKPTSAGRRAMVKVVNADLYKGRPHAALVEKQSKNAGRNNSGRITVRHQGGGHKQHYRLVDFRRNKDGIAARVERVEYDPNRSANIALICYADGERAYIIAPKGLEVGQTVLSGPEAPIKAGNVLPIRNIPVGSTIHCVELMPGKGAQIARAAGTSVQLLAREGAYAQLRLRSGEVRRVHVECRAAIGVVGNEEHGLRKIGKAGANRWRGIRPTVRGVAMNPVDHPHGGGEGRTGEGGVARSPWGQPAKGYRTRSNKRTDTMIVQRRHKR.

Disordered regions lie at residues 36 to 55 and 223 to 275; these read KQSK…RHQG and VAMN…RHKR. Positions 39–48 are enriched in polar residues; sequence KNAGRNNSGR. Positions 229 to 239 are enriched in basic and acidic residues; it reads DHPHGGGEGRT.

The protein belongs to the universal ribosomal protein uL2 family. Part of the 50S ribosomal subunit. Forms a bridge to the 30S subunit in the 70S ribosome.

One of the primary rRNA binding proteins. Required for association of the 30S and 50S subunits to form the 70S ribosome, for tRNA binding and peptide bond formation. It has been suggested to have peptidyltransferase activity; this is somewhat controversial. Makes several contacts with the 16S rRNA in the 70S ribosome. In Aromatoleum aromaticum (strain DSM 19018 / LMG 30748 / EbN1) (Azoarcus sp. (strain EbN1)), this protein is Large ribosomal subunit protein uL2.